The primary structure comprises 888 residues: Alanine--tRNA ligase (888 aa).

His573, His577, Cys676, and His680 together coordinate Zn(2+).

The protein belongs to the class-II aminoacyl-tRNA synthetase family. Zn(2+) serves as cofactor.

The protein resides in the cytoplasm. The enzyme catalyses tRNA(Ala) + L-alanine + ATP = L-alanyl-tRNA(Ala) + AMP + diphosphate. Functionally, catalyzes the attachment of alanine to tRNA(Ala) in a two-step reaction: alanine is first activated by ATP to form Ala-AMP and then transferred to the acceptor end of tRNA(Ala). Also edits incorrectly charged Ser-tRNA(Ala) and Gly-tRNA(Ala) via its editing domain. The sequence is that of Alanine--tRNA ligase from Corynebacterium diphtheriae (strain ATCC 700971 / NCTC 13129 / Biotype gravis).